A 194-amino-acid polypeptide reads, in one-letter code: Large ribosomal subunit protein eL15 (194 aa).

The tract at residues 164 to 194 (AGRKARGLRRKGRGAEKVRPSLRANFRKKRR) is disordered. Residues 166-175 (RKARGLRRKG) show a composition bias toward basic residues.

This sequence belongs to the eukaryotic ribosomal protein eL15 family.

This Archaeoglobus fulgidus (strain ATCC 49558 / DSM 4304 / JCM 9628 / NBRC 100126 / VC-16) protein is Large ribosomal subunit protein eL15 (rpl15e).